The chain runs to 161 residues: Large ribosomal subunit protein uL16 (161 aa).

Positions 140-161 are disordered; sequence LNKGNYKPAKTPVTADDSESSS.

The protein belongs to the universal ribosomal protein uL16 family. As to quaternary structure, part of the 50S ribosomal subunit.

In terms of biological role, binds 23S rRNA and is also seen to make contacts with the A and possibly P site tRNAs. The polypeptide is Large ribosomal subunit protein uL16 (Prochlorococcus marinus (strain NATL1A)).